A 355-amino-acid chain; its full sequence is N5-carboxyaminoimidazole ribonucleotide synthase (355 aa).

ATP is bound by residues arginine 80, lysine 120, 125-131 (GYDGRGQ), 153-156 (EQGI), glutamate 161, histidine 184, and 237-238 (NE). The region spanning 84–267 (KQLFDKLHLP…QFELHLRAIT (184 aa)) is the ATP-grasp domain.

It belongs to the PurK/PurT family. In terms of assembly, homodimer.

It catalyses the reaction 5-amino-1-(5-phospho-beta-D-ribosyl)imidazole + hydrogencarbonate + ATP = 5-carboxyamino-1-(5-phospho-D-ribosyl)imidazole + ADP + phosphate + 2 H(+). The protein operates within purine metabolism; IMP biosynthesis via de novo pathway; 5-amino-1-(5-phospho-D-ribosyl)imidazole-4-carboxylate from 5-amino-1-(5-phospho-D-ribosyl)imidazole (N5-CAIR route): step 1/2. Its function is as follows. Catalyzes the ATP-dependent conversion of 5-aminoimidazole ribonucleotide (AIR) and HCO(3)(-) to N5-carboxyaminoimidazole ribonucleotide (N5-CAIR). The protein is N5-carboxyaminoimidazole ribonucleotide synthase of Escherichia coli (strain K12).